We begin with the raw amino-acid sequence, 350 residues long: Phenylalanine--tRNA ligase alpha subunit (350 aa).

Residue E262 participates in Mg(2+) binding.

It belongs to the class-II aminoacyl-tRNA synthetase family. Phe-tRNA synthetase alpha subunit type 1 subfamily. Tetramer of two alpha and two beta subunits. Requires Mg(2+) as cofactor.

It localises to the cytoplasm. It catalyses the reaction tRNA(Phe) + L-phenylalanine + ATP = L-phenylalanyl-tRNA(Phe) + AMP + diphosphate + H(+). The polypeptide is Phenylalanine--tRNA ligase alpha subunit (Thermus thermophilus (strain ATCC BAA-163 / DSM 7039 / HB27)).